Here is a 333-residue protein sequence, read N- to C-terminus: GTP 3',8-cyclase (333 aa).

The Radical SAM core domain occupies 7 to 221 (KFGRVHDYIR…FEACDAIGFE (215 aa)). Arginine 16 contributes to the GTP binding site. 2 residues coordinate [4Fe-4S] cluster: cysteine 23 and cysteine 27. Position 29 (tyrosine 29) interacts with S-adenosyl-L-methionine. Cysteine 30 lines the [4Fe-4S] cluster pocket. Residue arginine 66 participates in GTP binding. Position 70 (glycine 70) interacts with S-adenosyl-L-methionine. Threonine 97 lines the GTP pocket. An S-adenosyl-L-methionine-binding site is contributed by serine 121. Lysine 158 contacts GTP. Position 192 (methionine 192) interacts with S-adenosyl-L-methionine. [4Fe-4S] cluster-binding residues include cysteine 257 and cysteine 260. Residue 262–264 (RLR) coordinates GTP. Cysteine 274 contributes to the [4Fe-4S] cluster binding site.

It belongs to the radical SAM superfamily. MoaA family. In terms of assembly, monomer and homodimer. [4Fe-4S] cluster serves as cofactor.

The enzyme catalyses GTP + AH2 + S-adenosyl-L-methionine = (8S)-3',8-cyclo-7,8-dihydroguanosine 5'-triphosphate + 5'-deoxyadenosine + L-methionine + A + H(+). The protein operates within cofactor biosynthesis; molybdopterin biosynthesis. Functionally, catalyzes the cyclization of GTP to (8S)-3',8-cyclo-7,8-dihydroguanosine 5'-triphosphate. The sequence is that of GTP 3',8-cyclase from Listeria welshimeri serovar 6b (strain ATCC 35897 / DSM 20650 / CCUG 15529 / CIP 8149 / NCTC 11857 / SLCC 5334 / V8).